Reading from the N-terminus, the 214-residue chain is Ribosomal RNA small subunit methyltransferase G (214 aa).

S-adenosyl-L-methionine-binding positions include Gly-81, Met-86, 132–133 (AE), and Arg-147.

It belongs to the methyltransferase superfamily. RNA methyltransferase RsmG family.

Its subcellular location is the cytoplasm. It carries out the reaction guanosine(527) in 16S rRNA + S-adenosyl-L-methionine = N(7)-methylguanosine(527) in 16S rRNA + S-adenosyl-L-homocysteine. Specifically methylates the N7 position of guanine in position 527 of 16S rRNA. The chain is Ribosomal RNA small subunit methyltransferase G from Pseudomonas syringae pv. syringae (strain B728a).